The following is an 828-amino-acid chain: Periplasmic nitrate reductase (828 aa).

Positions 1 to 31 (MKLSRRSFMKANAVAAAAAAAGLSVPGVARA) form a signal peptide, tat-type signal. The region spanning 39–95 (IKWDKAPCRFCGTGCGVLVGTQQGRVVACQGDPDAPVNRGLNCIKGYFLPKIMYGKD) is the 4Fe-4S Mo/W bis-MGD-type domain. [4Fe-4S] cluster is bound by residues Cys-46, Cys-49, Cys-53, and Cys-81. Residues Lys-83, Gln-150, Asn-175, Cys-179, 212–219 (WGSNMAEM), 243–247 (STFQH), 262–264 (QSD), Met-372, Gln-376, Asn-482, 508–509 (SD), Lys-531, Asp-558, and 718–727 (TGRVLEHWHT) contribute to the Mo-bis(molybdopterin guanine dinucleotide) site. Position 794 (Phe-794) interacts with substrate. Mo-bis(molybdopterin guanine dinucleotide)-binding residues include Asn-802 and Lys-819.

This sequence belongs to the prokaryotic molybdopterin-containing oxidoreductase family. NasA/NapA/NarB subfamily. Component of the periplasmic nitrate reductase NapAB complex composed of NapA and NapB. It depends on [4Fe-4S] cluster as a cofactor. Mo-bis(molybdopterin guanine dinucleotide) serves as cofactor. Predicted to be exported by the Tat system. The position of the signal peptide cleavage has not been experimentally proven.

Its subcellular location is the periplasm. It catalyses the reaction 2 Fe(II)-[cytochrome] + nitrate + 2 H(+) = 2 Fe(III)-[cytochrome] + nitrite + H2O. In terms of biological role, catalytic subunit of the periplasmic nitrate reductase complex NapAB. Receives electrons from NapB and catalyzes the reduction of nitrate to nitrite. In Salmonella arizonae (strain ATCC BAA-731 / CDC346-86 / RSK2980), this protein is Periplasmic nitrate reductase.